The chain runs to 382 residues: Flap endonuclease 1 (382 aa).

The interval 1 to 104 is N-domain; that stretch reads MGILGLSKLI…GELAKRAERR (104 aa). Asp34 contributes to the Mg(2+) binding site. Residues Arg47 and Arg70 each contribute to the DNA site. Residue Asp86 participates in Mg(2+) binding. Positions 95-118 are disordered; the sequence is GELAKRAERREDAQKALEKATEAG. Residues 96–115 show a composition bias toward basic and acidic residues; that stretch reads ELAKRAERREDAQKALEKAT. The interval 122–253 is I-domain; that stretch reads DMDKFNRRLV…KRATELMNSY (132 aa). Glu158, Glu160, Asp179, and Asp181 together coordinate Mg(2+). Glu158 is a DNA binding site. 2 residues coordinate DNA: Gly231 and Asp233. Mg(2+) is bound at residue Asp233. The interaction with PCNA stretch occupies residues 336–344; that stretch reads TQGRLDSFF. A disordered region spans residues 353–382; sequence TTPKRKADDKNNVQQKKSKTAGNTKGKRPK. Polar residues predominate over residues 364-375; the sequence is NVQQKKSKTAGN.

The protein belongs to the XPG/RAD2 endonuclease family. FEN1 subfamily. In terms of assembly, interacts with PCNA. Three molecules of FEN1 bind to one PCNA trimer with each molecule binding to one PCNA monomer. PCNA stimulates the nuclease activity without altering cleavage specificity. Requires Mg(2+) as cofactor. In terms of processing, phosphorylated. Phosphorylation upon DNA damage induces relocalization to the nuclear plasma.

Its subcellular location is the nucleus. The protein localises to the nucleolus. It is found in the nucleoplasm. It localises to the mitochondrion. Structure-specific nuclease with 5'-flap endonuclease and 5'-3' exonuclease activities involved in DNA replication and repair. During DNA replication, cleaves the 5'-overhanging flap structure that is generated by displacement synthesis when DNA polymerase encounters the 5'-end of a downstream Okazaki fragment. It enters the flap from the 5'-end and then tracks to cleave the flap base, leaving a nick for ligation. Also involved in the long patch base excision repair (LP-BER) pathway, by cleaving within the apurinic/apyrimidinic (AP) site-terminated flap. Acts as a genome stabilization factor that prevents flaps from equilibrating into structures that lead to duplications and deletions. Also possesses 5'-3' exonuclease activity on nicked or gapped double-stranded DNA, and exhibits RNase H activity. Also involved in replication and repair of rDNA and in repairing mitochondrial DNA. The chain is Flap endonuclease 1 from Glossina morsitans morsitans (Savannah tsetse fly).